The sequence spans 1458 residues: Phospholipase B1, membrane-associated (1458 aa).

The first 21 residues, Met-1 to Pro-21, serve as a signal peptide directing secretion. Topologically, residues Gln-22 to Tyr-1417 are extracellular. Tandem repeats lie at residues Glu-39–Ser-347, Val-362–Ser-707, and Met-708–Ser-1054. Positions Glu-39 to Ser-1402 are 4 X 308-326 AA approximate repeats. N-linked (GlcNAc...) asparagine glycosylation is found at Asn-173 and Asn-240. Ser-400 is a catalytic residue. A glycan (N-linked (GlcNAc...) asparagine) is linked at Asn-493. Asp-514 is a catalytic residue. 2 N-linked (GlcNAc...) asparagine glycosylation sites follow: Asn-529 and Asn-590. The active site involves His-655. Asn-690, Asn-783, Asn-797, Asn-809, Asn-1055, Asn-1113, Asn-1275, and Asn-1378 each carry an N-linked (GlcNAc...) asparagine glycan. Residues Ile-1064–Ser-1402 form repeat 4. The tract at residues Arg-1403 to Arg-1445 is necessary for membrane localization. A helical transmembrane segment spans residues Trp-1418 to Trp-1438. Residues Arg-1439–Leu-1458 are Cytoplasmic-facing.

The protein belongs to the 'GDSL' lipolytic enzyme family. Phospholipase B1 subfamily. In terms of processing, undergoes proteolytic cleavage in the ileum. As to expression, expressed in the epidermis (at protein level).

It is found in the apical cell membrane. The catalysed reaction is a 1,2-diacyl-sn-glycero-3-phosphocholine + H2O = a 1-acyl-sn-glycero-3-phosphocholine + a fatty acid + H(+). It catalyses the reaction a 1-O-alkyl-2-acyl-sn-glycero-3-phosphocholine + H2O = a 1-O-alkyl-sn-glycero-3-phosphocholine + a fatty acid + H(+). It carries out the reaction a 1-acyl-sn-glycero-3-phosphocholine + H2O = sn-glycerol 3-phosphocholine + a fatty acid + H(+). The enzyme catalyses a triacylglycerol + H2O = a diacylglycerol + a fatty acid + H(+). The catalysed reaction is 1,2-dihexadecanoyl-sn-glycero-3-phosphocholine + H2O = 1-hexadecanoyl-sn-glycero-3-phosphocholine + hexadecanoate + H(+). It catalyses the reaction 1-hexadecanoyl-2-(9Z-octadecenoyl)-sn-glycero-3-phosphocholine + H2O = 1-hexadecanoyl-sn-glycero-3-phosphocholine + (9Z)-octadecenoate + H(+). It carries out the reaction 1,2-di-(9Z-octadecenoyl)-sn-glycero-3-phosphocholine + H2O = 1-(9Z-octadecenoyl)-sn-glycero-3-phosphocholine + (9Z)-octadecenoate + H(+). The enzyme catalyses 1-hexadecanoyl-2-(9Z,12Z-octadecadienoyl)-sn-glycero-3-phosphocholine + H2O = (9Z,12Z)-octadecadienoate + 1-hexadecanoyl-sn-glycero-3-phosphocholine + H(+). The catalysed reaction is 1-hexadecanoyl-2-(9Z,12Z-octadecadienoyl)-sn-glycero-3-phosphocholine + H2O = 2-(9Z,12Z-octadecadienoyl)-sn-glycero-3-phosphocholine + hexadecanoate + H(+). It catalyses the reaction 1-hexadecanoyl-2-(9Z-octadecenoyl)-sn-glycero-3-phosphoethanolamine + H2O = 1-hexadecanoyl-sn-glycero-3-phosphoethanolamine + (9Z)-octadecenoate + H(+). It carries out the reaction 1-hexadecanoyl-2-(9Z-octadecenoyl)-sn-glycero-3-phospho-(1'-sn-glycerol) + H2O = 1-hexadecanoyl-sn-glycero-3-phospho-(1'-sn-glycerol) + (9Z)-octadecenoate + H(+). The enzyme catalyses 1,2-dihexadecanoyl-sn-glycero-3-phosphocholine + 2 H2O = sn-glycerol 3-phosphocholine + 2 hexadecanoate + 2 H(+). The catalysed reaction is 1-O-hexadecyl-2-(9Z)-octadecenoyl-sn-glycero-3-phosphocholine + H2O = 1-O-hexadecyl-sn-glycero-3-phosphocholine + (9Z)-octadecenoate + H(+). It catalyses the reaction 1-hexadecanoyl-sn-glycero-3-phosphocholine + H2O = sn-glycerol 3-phosphocholine + hexadecanoate + H(+). It carries out the reaction 1,2,3-tri-(9Z-octadecenoyl)-glycerol + H2O = di-(9Z)-octadecenoylglycerol + (9Z)-octadecenoate + H(+). The enzyme catalyses 1-hexadecanoyl-2-(9Z)-octadecenoyl-3-octadecanoyl-sn-glycerol + H2O = 1-hexadecanoyl-2-(9Z-octadecenoyl)-sn-glycerol + octadecanoate + H(+). The catalysed reaction is 1,3-dihexadecanoyl-2-(9Z-octadecenoyl)glycerol + H2O = 1,3-dihexadecanoylglycerol + (9Z)-octadecenoate + H(+). It catalyses the reaction 1,3-dihexadecanoyl-2-(9Z-octadecenoyl)glycerol + H2O = 1-hexadecanoyl-2-(9Z-octadecenoyl)-glycerol + hexadecanoate + H(+). It carries out the reaction 1-hexadecanoyl-2-(9Z)-octadecenoyl-3-octadecanoyl-sn-glycerol + H2O = 1-hexadecanoyl-3-octadecanoyl-sn-glycerol + (9Z)-octadecenoate + H(+). The enzyme catalyses 1-hexadecanoyl-2-(9Z)-octadecenoyl-3-octadecanoyl-sn-glycerol + H2O = 2-(9Z-octadecenoyl)-3-octadecanoyl-sn-glycerol + hexadecanoate + H(+). The catalysed reaction is 1-octadecanoyl-2-(9Z,12Z)-octadecadienoyl-sn-glycerol + H2O = 1-octadecanoyl-sn-glycerol + (9Z,12Z)-octadecadienoate + H(+). It catalyses the reaction 1,2-di-(9Z-octadecenoyl)-sn-glycerol + H2O = 1-(9Z-octadecenoyl)-sn-glycerol + (9Z)-octadecenoate + H(+). It carries out the reaction 2,3-di-(9Z)-octadecenoyl-sn-glycerol + H2O = 3-(9Z-octadecenoyl)-sn-glycerol + (9Z)-octadecenoate + H(+). The enzyme catalyses 1,3-di-(9Z-octadecenoyl)-glycerol + H2O = 1-(9Z-octadecenoyl)-glycerol + (9Z)-octadecenoate + H(+). The catalysed reaction is 1-(9Z-octadecenoyl)-glycerol + H2O = glycerol + (9Z)-octadecenoate + H(+). It catalyses the reaction 2-(9Z-octadecenoyl)-glycerol + H2O = glycerol + (9Z)-octadecenoate + H(+). In terms of biological role, calcium-independent membrane-associated phospholipase that catalyzes complete diacylation of phospholipids by hydrolyzing both sn-1 and sn-2 fatty acyl chains attached to the glycerol backbone (phospholipase B activity). Has dual phospholipase and lysophospholipase activities toward diacylphospholipids. Preferentially cleaves sn-2 ester bonds over sn-1 bonds. Acts as a lipase toward glycerolipid substrates. Hydrolyzes fatty acyl chains of diacylglycerols with preference for the sn-2 position and of triacylglycerols with not positional selectivity. May also hydrolyze long chain retinyl esters such as retinyl palmitate. May contribute to digestion of dietary phospholipids, glycerolipids and retinoids, facilitating lipid absorption at the brush border. This Homo sapiens (Human) protein is Phospholipase B1, membrane-associated (PLB1).